A 236-amino-acid polypeptide reads, in one-letter code: Transcription repressor MYB6 (236 aa).

2 HTH myb-type domains span residues 9 to 61 (KAHT…INYL) and 62 to 116 (RPDL…KRKL). 2 DNA-binding regions (H-T-H motif) span residues 37 to 61 (WRSLPKSAGLLRCGKSCRLRWINYL) and 89 to 112 (WSLIAGRLPGRTDNEIKNYWNTHI). Residues 159–181 (PKTENSSDNGASTSGTTTDEDLR) form a disordered region. A compositionally biased stretch (polar residues) spans 162–175 (ENSSDNGASTSGTT).

In terms of assembly, interacts with BHLH012/MYC1 and BHLH042/TT8. As to expression, expressed in roots, stems, flower buds, and siliques.

The protein resides in the nucleus. The protein is Transcription repressor MYB6 (MYB6) of Arabidopsis thaliana (Mouse-ear cress).